We begin with the raw amino-acid sequence, 456 residues long: Protein FAM124B (456 aa).

Residues 262–313 (NGCLRGDTHPQDSSLNSVSTQRTLEPRSRRRSRSRRFKVHSLELPQPSGSWE) are disordered. A compositionally biased stretch (polar residues) spans 272 to 284 (QDSSLNSVSTQRT). The span at 289–300 (SRRRSRSRRFKV) shows a compositional bias: basic residues.

It belongs to the FAM124 family. Interacts with CHD7 and CHD8. In terms of tissue distribution, expressed strongly in lung, at slightly lower levels in heart, kidney, brain and testis, and weakly in liver (at protein level). In brain, highly expressed in cortex, hippocampus, dentate gyrus, caudate putamen and cerebellum (at protein level).

Its subcellular location is the nucleus. The polypeptide is Protein FAM124B (Fam124b) (Mus musculus (Mouse)).